The primary structure comprises 310 residues: Olfactory receptor 5P53 (310 aa).

The Extracellular portion of the chain corresponds to 1–25 (MEAENHTTVAELIILGLTEDPKLCI). N-linked (GlcNAc...) asparagine glycosylation occurs at Asn-5. The chain crosses the membrane as a helical span at residues 26-46 (VFFVIFLGVYIVTLVGNISII). At 47–54 (TLIRISSQ) the chain is on the cytoplasmic side. The chain crosses the membrane as a helical span at residues 55–75 (LHTPMYLFLSHLAFVDILYST). Residues 76 to 99 (SVSVIMHMELLGHGLALPVAACAA) lie on the Extracellular side of the membrane. Cys-97 and Cys-189 are oxidised to a cystine. Residues 100-120 (QLCITVSFGSAECFLLAAMAY) traverse the membrane as a helical segment. Topologically, residues 121–133 (DRYVAICSPLLYS) are cytoplasmic. The chain crosses the membrane as a helical span at residues 134–154 (TLMSPRVCFLLLGMSYVGGCM). At 155 to 196 (NGWTFTGCLLSLSFCGPNQIDHFFCDFSPLLKLSCSDVSIIG) the chain is on the extracellular side. A helical transmembrane segment spans residues 197–217 (IIPSISSGSIIVVTVFVIAVS). The Cytoplasmic portion of the chain corresponds to 218 to 237 (YIYILITILNMRSTEGRHKA). Residues 238-258 (FSTCTSHLTAVTLYYGTITFI) traverse the membrane as a helical segment. Residues 259–271 (YVMPKSNYSTEQN) are Extracellular-facing. Asn-265 carries N-linked (GlcNAc...) asparagine glycosylation. Residues 272–292 (KVLSVFYTVVIPMLNPLIYSL) form a helical membrane-spanning segment. At 293-310 (RNRDVKEALRKATVRVYS) the chain is on the cytoplasmic side.

This sequence belongs to the G-protein coupled receptor 1 family.

The protein resides in the cell membrane. Potential odorant receptor. The chain is Olfactory receptor 5P53 from Mus musculus (Mouse).